We begin with the raw amino-acid sequence, 694 residues long: uncharacterized protein (694 aa).

Positions 17-168 constitute a Resolvase/invertase-type recombinase catalytic domain; the sequence is DAFLYVRQSS…GGILNKARRG (152 aa). Catalysis depends on S25, which acts as the O-(5'-phospho-DNA)-serine intermediate. A DNA-binding region (recombinase) is located at residues 175-316; that stretch reads PIGLVYTPDA…QAALEQNATG (142 aa). The chain crosses the membrane as a helical span at residues 386 to 406; sequence AVSALLLEVMAPAAIDVALAV.

Its subcellular location is the membrane. This is an uncharacterized protein from Sinorhizobium fredii (strain NBRC 101917 / NGR234).